A 328-amino-acid polypeptide reads, in one-letter code: Cytochrome c biogenesis protein CcsA (328 aa).

Transmembrane regions (helical) follow at residues 13-33 (ISFS…LVNL), 46-66 (GIII…IYSG), 73-93 (LYES…VSYF), 101-121 (LNAI…SGLL), 146-166 (MILG…LLVI), 234-254 (IISL…VWAN), 263-283 (WDPK…YLHI), and 295-315 (AIVA…VILL).

The protein belongs to the CcmF/CycK/Ccl1/NrfE/CcsA family. As to quaternary structure, may interact with Ccs1.

It is found in the plastid. It localises to the chloroplast thylakoid membrane. Required during biogenesis of c-type cytochromes (cytochrome c6 and cytochrome f) at the step of heme attachment. The chain is Cytochrome c biogenesis protein CcsA from Crucihimalaya wallichii (Rock-cress).